A 1022-amino-acid chain; its full sequence is Collagen alpha-1(I) chain (1022 aa).

Residues 1-1022 (SAGGISVPGP…PGPPGPPGPP (1022 aa)) form a disordered region. 4-hydroxyproline occurs at positions 20, 23, 26, 35, 38, 41, 56, 71, 77, 86, and 92. The span at 28–47 (PQGFQGPPGEPGEPGASGPM) shows a compositional bias: low complexity. The segment covering 59 to 73 (NGDDGEAGKPGRPGE) has biased composition (basic and acidic residues). Lysine 95 is subject to 5-hydroxylysine; alternate. Lysine 95 carries an O-linked (Gal...) hydroxylysine; alternate glycan. Serine 101 is subject to Phosphoserine. Over residues 109–125 (DAGPAGPKGEPGSPGEN) the composition is skewed to low complexity. 16 positions are modified to 4-hydroxyproline: proline 119, proline 122, proline 128, proline 137, proline 143, proline 164, proline 173, proline 176, proline 203, proline 206, proline 218, proline 224, proline 233, proline 239, proline 242, and proline 257. Low complexity predominate over residues 143 to 161 (PGASGPAGARGNDGAAGAA). A compositionally biased stretch (pro residues) spans 163 to 175 (PPGPTGPAGPPGF). Over residues 209–259 (AGAAGPAGNPGADGQPGAKGANGAPGIAGAPGFPGARGPSGPQGPSGAPGP) the composition is skewed to low complexity. Lysine 260 is subject to 5-hydroxylysine. Proline 266, proline 269, proline 281, proline 290, proline 305, proline 311, proline 320, and proline 326 each carry 4-hydroxyproline. Residues 315–324 (GERGGPGSRG) are compositionally biased toward gly residues. 5-hydroxylysine is present on lysine 335. 4-hydroxyproline occurs at positions 344, 353, 359, 365, 374, 377, 386, 395, 401, 413, 422, 431, 434, 452, 470, 476, 482, 488, 494, 500, 512, 521, 533, 545, 548, 554, 560, and 569. Positions 368–394 (KGLTGSPGSPGPDGKTGPPGPAGQDGR) are enriched in low complexity. Low complexity predominate over residues 403-422 (ARGQAGVMGFPGPKGAAGEP). Positions 464–491 (QGPAGSPGFQGLPGPAGPPGEAGKPGEQ) are enriched in low complexity. Residues 530 to 557 (NGAPGNDGAKGDAGAPGAPGSQGAPGLQ) show a composition bias toward low complexity. A 5-hydroxylysine modification is found at lysine 581. 4-hydroxyproline is present on residues proline 587, proline 602, and proline 608. A compositionally biased stretch (low complexity) spans 614-628 (SGPSGPAGPTGARGA). At serine 617 the chain carries Phosphoserine. Residues proline 629, proline 635, proline 638, proline 647, proline 653, proline 671, proline 680, and proline 689 each carry the 4-hydroxyproline modification. Low complexity predominate over residues 641 to 668 (AGFAGPPGADGQPGAKGEPGDAGAKGDA). The span at 670–682 (PPGPAGPTGPPGP) shows a compositional bias: pro residues. 5-hydroxylysine is present on lysine 692. The segment covering 697-713 (SAGPPGATGFPGAAGRV) has biased composition (low complexity). Proline 701 and proline 707 each carry 4-hydroxyproline. 3-hydroxyproline is present on proline 715. Proline 716, proline 725, proline 728, proline 749, proline 758, proline 767, proline 776, proline 794, proline 803, proline 806, proline 812, proline 827, proline 833, proline 839, proline 848, and proline 854 each carry 4-hydroxyproline. A compositionally biased stretch (low complexity) spans 742–751 (ETGPAGRPGE). The segment covering 761 to 776 (TGEKGSPGADGPAGAP) has biased composition (low complexity). The span at 826–836 (PPGPVGPPGLA) shows a compositional bias: pro residues. The segment covering 838–853 (PPGESGREGSPGAEGS) has biased composition (low complexity). Lysine 863 carries the post-translational modification 5-hydroxylysine. The segment covering 872-887 (AGPPGAPGAPGAPGPV) has biased composition (pro residues). Proline 875, proline 878, and proline 881 each carry 4-hydroxyproline. A compositionally biased stretch (low complexity) spans 908–922 (AGPAGARGPAGPQGP). The segment covering 923-937 (RGDKGETGEQGDRGI) has biased composition (basic and acidic residues). Lysine 926 is modified (5-hydroxylysine). A 5-hydroxylysine; alternate modification is found at lysine 938. An O-linked (Gal...) hydroxylysine; alternate glycan is attached at lysine 938. A 4-hydroxyproline mark is found at proline 953, proline 956, proline 974, and proline 989. Over residues 956–989 (PGEQGPSGASGPAGPRGPPGSAGSPGKDGLNGLP) the composition is skewed to low complexity. Proline 994 carries the 3-hydroxyproline modification. Proline 995 is modified (4-hydroxyproline). The segment covering 1007–1022 (VGPPGPPGPPGPPGPP) has biased composition (pro residues). Position 1009 is a 3-hydroxyproline (proline 1009). Proline 1010 is subject to 4-hydroxyproline. Proline 1012 is modified (3-hydroxyproline). Proline 1013 is modified (4-hydroxyproline). 3-hydroxyproline is present on proline 1015. 3 positions are modified to 4-hydroxyproline: proline 1016, proline 1019, and proline 1022.

This sequence belongs to the fibrillar collagen family. Trimers of one alpha 2(I) and two alpha 1(I) chains. Prolines at the third position of the tripeptide repeating unit (G-X-Y) are hydroxylated in some or all of the chains. In terms of tissue distribution, expressed in bone.

It is found in the secreted. It localises to the extracellular space. Its subcellular location is the extracellular matrix. Functionally, type I collagen is a member of group I collagen (fibrillar forming collagen). The chain is Collagen alpha-1(I) chain from Mylodon darwinii (Giant ground sloth).